Here is a 376-residue protein sequence, read N- to C-terminus: Hydroxylysine kinase (376 aa).

Aspartate 229 functions as the Proton acceptor in the catalytic mechanism.

This sequence belongs to the aminoglycoside phosphotransferase family.

It is found in the cytoplasm. The catalysed reaction is (5R)-5-hydroxy-L-lysine + GTP = (5R)-5-phosphooxy-L-lysine + GDP + H(+). Functionally, catalyzes the GTP-dependent phosphorylation of 5-hydroxy-L-lysine. This chain is Hydroxylysine kinase (HYKK), found in Bos taurus (Bovine).